The chain runs to 196 residues: Probable nicotinate-nucleotide adenylyltransferase (196 aa).

This sequence belongs to the NadD family.

The catalysed reaction is nicotinate beta-D-ribonucleotide + ATP + H(+) = deamido-NAD(+) + diphosphate. Its pathway is cofactor biosynthesis; NAD(+) biosynthesis; deamido-NAD(+) from nicotinate D-ribonucleotide: step 1/1. Catalyzes the reversible adenylation of nicotinate mononucleotide (NaMN) to nicotinic acid adenine dinucleotide (NaAD). This Caldicellulosiruptor bescii (strain ATCC BAA-1888 / DSM 6725 / KCTC 15123 / Z-1320) (Anaerocellum thermophilum) protein is Probable nicotinate-nucleotide adenylyltransferase.